A 244-amino-acid polypeptide reads, in one-letter code: tRNA (guanine-N(7)-)-methyltransferase (244 aa).

Glutamate 75, glutamate 100, aspartate 127, and aspartate 150 together coordinate S-adenosyl-L-methionine. Aspartate 150 is a catalytic residue. Residues lysine 154, aspartate 186, and threonine 223–glutamate 226 contribute to the substrate site.

This sequence belongs to the class I-like SAM-binding methyltransferase superfamily. TrmB family.

The enzyme catalyses guanosine(46) in tRNA + S-adenosyl-L-methionine = N(7)-methylguanosine(46) in tRNA + S-adenosyl-L-homocysteine. The protein operates within tRNA modification; N(7)-methylguanine-tRNA biosynthesis. Catalyzes the formation of N(7)-methylguanine at position 46 (m7G46) in tRNA. This Xylella fastidiosa (strain M12) protein is tRNA (guanine-N(7)-)-methyltransferase.